Here is a 679-residue protein sequence, read N- to C-terminus: Methionine--tRNA ligase (679 aa).

Positions 15 to 25 match the 'HIGH' region motif; it reads PYANGSIHLGH. Zn(2+) contacts are provided by C146, C149, C159, and C162. The 'KMSKS' region signature appears at 332–336; that stretch reads KMSKS. K335 provides a ligand contact to ATP. A tRNA-binding domain is found at 577-679; it reads DFAKVDMRVA…AGALPGMPVK (103 aa).

Belongs to the class-I aminoacyl-tRNA synthetase family. MetG type 1 subfamily. In terms of assembly, homodimer. Requires Zn(2+) as cofactor.

It localises to the cytoplasm. The enzyme catalyses tRNA(Met) + L-methionine + ATP = L-methionyl-tRNA(Met) + AMP + diphosphate. Functionally, is required not only for elongation of protein synthesis but also for the initiation of all mRNA translation through initiator tRNA(fMet) aminoacylation. This is Methionine--tRNA ligase from Sodalis glossinidius (strain morsitans).